The sequence spans 225 residues: Late embryogenesis abundant protein 29 (225 aa).

Disordered stretches follow at residues 1–167 and 193–225; these read MASN…GGFL and TEEE…YQRK. 4 stretches are compositionally biased toward basic and acidic residues: residues 28–39, 49–61, 71–83, and 93–119; these read MRDKAEEGRDKT, KAHE…KDKT, KAHE…KEKT, and KAHE…KDKA. LEA 11-mer repeat repeat units lie at residues 53-63, 75-85, and 97-107; these read TAQSAKDKTSQ, TAQSAKEKTSQ, and TTQAAKEKTSQ. The span at 141–153 shows a compositional bias: polar residues; that stretch reads TKETAQGAAQYTK. Residues 154 to 163 show a composition bias toward basic and acidic residues; the sequence is ETAEAGRDKT. Low complexity predominate over residues 205 to 225; sequence TTTTTATTRTTDPTHQTYQRK.

It belongs to the LEA type 4 family.

It is found in the cytoplasm. The protein localises to the cytosol. Its function is as follows. Involved dehydration tolerance. The sequence is that of Late embryogenesis abundant protein 29 from Arabidopsis thaliana (Mouse-ear cress).